The following is a 326-amino-acid chain: Aspartate--ammonia ligase (326 aa).

Belongs to the class-II aminoacyl-tRNA synthetase family. AsnA subfamily.

Its subcellular location is the cytoplasm. The catalysed reaction is L-aspartate + NH4(+) + ATP = L-asparagine + AMP + diphosphate + H(+). It functions in the pathway amino-acid biosynthesis; L-asparagine biosynthesis; L-asparagine from L-aspartate (ammonia route): step 1/1. The protein is Aspartate--ammonia ligase of Malacoplasma penetrans (strain HF-2) (Mycoplasma penetrans).